A 177-amino-acid polypeptide reads, in one-letter code: Large ribosomal subunit protein uL6 (177 aa).

The protein belongs to the universal ribosomal protein uL6 family. As to quaternary structure, part of the 50S ribosomal subunit.

Functionally, this protein binds to the 23S rRNA, and is important in its secondary structure. It is located near the subunit interface in the base of the L7/L12 stalk, and near the tRNA binding site of the peptidyltransferase center. The sequence is that of Large ribosomal subunit protein uL6 from Beijerinckia indica subsp. indica (strain ATCC 9039 / DSM 1715 / NCIMB 8712).